Consider the following 1171-residue polypeptide: ATP-dependent helicase/deoxyribonuclease subunit B (1171 aa).

The region spanning 1-390 (MSLRFVIGRA…HPLVECIRSA (390 aa)) is the UvrD-like helicase ATP-binding domain. 8–15 (GRAGSGKS) provides a ligand contact to ATP. The 307-residue stretch at 281–587 (MEQPRFHSPA…QFANIPPSLD (307 aa)) folds into the UvrD-like helicase C-terminal domain. [4Fe-4S] cluster contacts are provided by C805, C1129, C1132, and C1138.

Belongs to the helicase family. AddB/RexB type 1 subfamily. Heterodimer of AddA and AddB. It depends on Mg(2+) as a cofactor. The cofactor is [4Fe-4S] cluster.

The heterodimer acts as both an ATP-dependent DNA helicase and an ATP-dependent, dual-direction single-stranded exonuclease. Recognizes the chi site generating a DNA molecule suitable for the initiation of homologous recombination. The AddB subunit has 5' -&gt; 3' nuclease activity but not helicase activity. The sequence is that of ATP-dependent helicase/deoxyribonuclease subunit B from Bacillus cereus (strain ZK / E33L).